The primary structure comprises 140 residues: Respiratory supercomplex factor 1, mitochondrial (140 aa).

One can recognise an HIG1 domain in the interval 7–98 (SFDNGNSIDE…QDPKQKLEQK (92 aa)). 2 helical membrane passes run 35 to 54 (LVPL…ARAL) and 66 to 88 (FFAR…MYYG).

Belongs to the RCF1 family. Associates with the respiratory chain complex III/complex IV supercomplex.

It localises to the mitochondrion membrane. Its function is as follows. Cytochrome c oxidase subunit which plays a role in assembly of respiratory supercomplexes. The protein is Respiratory supercomplex factor 1, mitochondrial (RCF1) of Yarrowia lipolytica (strain CLIB 122 / E 150) (Yeast).